Reading from the N-terminus, the 424-residue chain is E3 ubiquitin-protein ligase RNF26 (424 aa).

The next 5 helical transmembrane spans lie at 24–44 (LNFL…AFIY), 60–80 (GFLL…FGGL), 157–177 (ISTQ…TGPL), 183–203 (VVAA…ILLW), and 224–244 (VVFH…ILIV). The RING-type zinc-finger motif lies at 371–413 (CVICQDQSKTVLLLPCRHLCLCQACTEILMRHPVYHRNCPLCR).

Interacts with INCA1. Interacts with TMEM43, ENDOD1, TMEM33 and TMED1 to form a complex capable of modulating innate immune signaling through the cGAS-STING pathway. Interacts with UBE2J1; this interaction is important for SQSTM1 ubiquitination.

It is found in the endoplasmic reticulum membrane. The catalysed reaction is S-ubiquitinyl-[E2 ubiquitin-conjugating enzyme]-L-cysteine + [acceptor protein]-L-lysine = [E2 ubiquitin-conjugating enzyme]-L-cysteine + N(6)-ubiquitinyl-[acceptor protein]-L-lysine.. It participates in protein modification; protein ubiquitination. E3 ubiquitin-protein ligase that plays a key role in endosome organization by retaining vesicles in the perinuclear cloud. Acts as a platform for perinuclear positioning of the endosomal system by mediating ubiquitination of SQSTM1 through interaction with the ubiquitin conjugating enzyme UBE2J1. Ubiquitinated SQSTM1 attracts specific vesicle-associated adapters, forming a molecular bridge that restrains cognate vesicles in the perinuclear region and organizes the endosomal pathway for efficient cargo transport. Also acts as a regulator of type I interferon production in response to viral infection by mediating the formation of 'Lys-11'-linked polyubiquitin chains on TMEM173/STING, leading to stabilize TMEM173/STING. Also required to limit type I interferon response by promoting autophagic degradation of IRF3. This chain is E3 ubiquitin-protein ligase RNF26, found in Mus musculus (Mouse).